Here is an 864-residue protein sequence, read N- to C-terminus: Coiled-coil and C2 domain-containing protein 1B (864 aa).

The interval 82–154 (QDCMTDMTGE…VNSSVAEIQH (73 aa)) is disordered. Acidic residues-rich tracts occupy residues 89 to 104 (TGED…EELL) and 111 to 129 (VGEE…EESE). Residues 91–118 (EDDDDDLEEDEELLAELQDVVGEEEEVE) adopt a coiled-coil conformation. Residues 142–154 (EQQVNSSVAEIQH) are compositionally biased toward polar residues. Residues 162 to 209 (GMLQVLEERIGNYKEAISNAKLSNESAKARRYERGLKTLESMLSAARQ) are a coiled coil. The interval 218–249 (IPPPVACGKPAVSPTTDVPTTDTSKQGLGDLN) is disordered. Low complexity predominate over residues 229-241 (VSPTTDVPTTDTS). The stretch at 385–412 (VGSLLQALQQRMEKYKSAAQQAKSSGDD) forms a coiled coil. Disordered stretches follow at residues 441 to 463 (AELP…EEGS) and 478 to 502 (AGED…PTQL). Residues 444 to 453 (PVPPGFPPLP) are compositionally biased toward pro residues. Coiled-coil stretches lie at residues 464 to 488 (VEKA…DEDE) and 535 to 564 (PAVQ…KNDL). The C2 domain maps to 685-820 (HFEDKTLKIV…ETQCEIREIV (136 aa)).

The protein belongs to the CC2D1 family.

The protein is Coiled-coil and C2 domain-containing protein 1B (cc2d1b) of Xenopus laevis (African clawed frog).